Reading from the N-terminus, the 537-residue chain is Ribonuclease Y (537 aa).

Residues 4–24 traverse the membrane as a helical segment; it reads FPIIMSVFAAIIGLVIGYVSV. A disordered region spans residues 112-148; that stretch reads ASTLDRKDDNLSNKEKALEQKEQSLSDKSKHIDAREE. Positions 227–287 constitute a KH domain; it reads TNSTVHLPDD…IRREIARMTM (61 aa). In terms of domain architecture, HD spans 353–446; that stretch reads VLRHSIEVAK…VAAADALSAA (94 aa).

Belongs to the RNase Y family.

It localises to the cell membrane. Its function is as follows. Endoribonuclease that initiates mRNA decay. The protein is Ribonuclease Y of Streptococcus sanguinis (strain SK36).